We begin with the raw amino-acid sequence, 710 residues long: Solute carrier organic anion transporter family member 3A1 (710 aa).

M1 carries the post-translational modification N-acetylmethionine. The tract at residues 1–25 (MQAKKPGGSSGGGRSGELQGDEAQR) is disordered. Topologically, residues 1–40 (MQAKKPGGSSGGGRSGELQGDEAQRNKKKKKKVSCFSNIK) are cytoplasmic. A helical transmembrane segment spans residues 41-60 (IFLVSECALMLAQGTVGAYL). Residues 61-79 (VSVLTTLERRFNLQSADVG) are Extracellular-facing. The helical transmembrane segment at 80 to 100 (VIASSFEIGNLALILFVSYFG) threads the bilayer. Residues 101–106 (ARGHRP) are Cytoplasmic-facing. A helical transmembrane segment spans residues 107-131 (RLIGCGGIVMALGALLSALPEFLTH). Residues 132-174 (QYKYEAGEIRWGAEGRDVCAANGSGGDQGPDPDLICRSRTATN) lie on the Extracellular side of the membrane. N153 carries N-linked (GlcNAc...) asparagine glycosylation. A helical transmembrane segment spans residues 175–203 (MMYLLLIGAQVLLGIGATPVQPLGVSYID). Residues 204–222 (DHVRRKDSSLYIGILFTML) lie on the Cytoplasmic side of the membrane. The chain crosses the membrane as a helical span at residues 223-243 (VFGPACGFILGSFCTKIYVDA). The Extracellular portion of the chain corresponds to 244 to 261 (VFIDTSNLDITPDDPRWI). The chain crosses the membrane as a helical span at residues 262–286 (GAWWGGFLLCGALLFFSSVLMFGFP). Over 287-344 (QSLPPHSDPALESEQAMLPEREYERPKPSNGVLRHPLEPDSSASCFQQLRVIPKVTKH) the chain is Cytoplasmic. Residues 345 to 366 (LLSNPVFTCIILAACMEIAVVA) form a helical membrane-spanning segment. Over 367 to 386 (GFAAFLGKYLEQQFNLTTSS) the chain is Extracellular. N-linked (GlcNAc...) asparagine glycosylation is present at N381. The chain crosses the membrane as a helical span at residues 387–410 (ANQLLGMTAIPCACLGIFLGGLLV). Residues 411 to 414 (KKLS) are Cytoplasmic-facing. The helical transmembrane segment at 415–438 (LSALGAIRMAMLVNLVSTACYVSF) threads the bilayer. At 439–539 (LFLGCDTGPV…PGCQEAFLTF (101 aa)) the chain is on the extracellular side. N457 is a glycosylation site (N-linked (GlcNAc...) asparagine). The Kazal-like domain maps to 465 to 513 (LDPYSSCNKNCECQTDSFTPVCGADGITYLSACFAGCNSTNLTGCACLM). 3 cysteine pairs are disulfide-bonded: C471–C501, C477–C497, and C486–C511. 3 N-linked (GlcNAc...) asparagine glycosylation sites follow: N502, N505, and N519. Residues 540-562 (LCVMCVCSMIGAMAQTPSVIILI) traverse the membrane as a helical segment. The Cytoplasmic segment spans residues 563–571 (RTVSPELKS). A helical transmembrane segment spans residues 572-597 (YALGVLFLLLRLLGFIPPPLIFGAGI). The Extracellular segment spans residues 598-630 (DSTCLFWSTFCGEQGACALYDNVAYRYLYVSIA). A helical transmembrane segment spans residues 631-648 (IALKSFAFLLYTTTWQCL). At 649–705 (RKNYKRYIKNHEGGLSTSEFFASTLTLDNLGRDPVPANQTHRTKFIYNLEDHEWCEN) the chain is on the cytoplasmic side.

The protein belongs to the organo anion transporter (TC 2.A.60) family.

The protein localises to the basolateral cell membrane. The protein resides in the apical cell membrane. Its subcellular location is the basal cell membrane. The catalysed reaction is L-thyroxine(out) = L-thyroxine(in). It catalyses the reaction prostaglandin E1(out) = prostaglandin E1(in). It carries out the reaction prostaglandin E2(out) = prostaglandin E2(in). The enzyme catalyses prostaglandin F2alpha(out) = prostaglandin F2alpha(in). The catalysed reaction is (5Z,8Z,11Z,14Z)-eicosatetraenoate(out) = (5Z,8Z,11Z,14Z)-eicosatetraenoate(in). It catalyses the reaction taurocholate(out) = taurocholate(in). It carries out the reaction glycocholate(out) = glycocholate(in). The enzyme catalyses estrone 3-sulfate(out) = estrone 3-sulfate(in). The catalysed reaction is argipressin(out) = argipressin(in). Functionally, putative organic anion antiporter with apparent broad substrate specificity. Recognizes various substrates including thyroid hormone L-thyroxine, prostanoids such as prostaglandin E1 and E2, bile acids such as taurocholate, glycolate and glycochenodeoxycholate and peptide hormones such as L-arginine vasopressin, likely operating in a tissue-specific manner. The transport mechanism, its electrogenicity and potential tissue-specific counterions remain to be elucidated. The protein is Solute carrier organic anion transporter family member 3A1 (SLCO3A1) of Bos taurus (Bovine).